Consider the following 328-residue polypeptide: UPF0194 membrane protein YPA_1093 (328 aa).

Residues 1–22 (MNRKKIIVAAVIVALLATLAYG) form the signal peptide. Coiled-coil stretches lie at residues 80–109 (YLNALKQAQANVQSAQAQLALLKAGYREEE) and 141–209 (KAVS…ILLA).

This sequence belongs to the UPF0194 family.

The protein resides in the periplasm. The chain is UPF0194 membrane protein YPA_1093 from Yersinia pestis bv. Antiqua (strain Antiqua).